Reading from the N-terminus, the 325-residue chain is MRNITEATFFVLKGLTDNNELQIILFLLFLAIYIFTLIGNVGLIILVVGDSQLHNPMYCFLSVLSSVDACYSTDITPNMLVGFMSKSKIISFYGCATQMFLAVTFGTTECFLLAAMAYDRYVAIHDPLLYAVSMSPRVYIPLIIASYAGGIVHAIIHTVATFSLSFCRSNEVKHIFCDIPPLLAISCSETYVNELLLFFFVSFIELVTILIVLVSYAFILLSILKMNSSEGRRKVFSTCGAHLTAVSIYYGTILFMYVRPSSNYSLEHDMIVSTFYTIGIPMLNPIIYSLRNKDVKEAMKRVLRKKINIKHRIKKLNDFSVFLMP.

Residues 1 to 22 are Extracellular-facing; it reads MRNITEATFFVLKGLTDNNELQ. Asparagine 3 carries N-linked (GlcNAc...) asparagine glycosylation. 2 helical membrane-spanning segments follow: residues 23-43 and 44-64; these read IILF…NVGL and IILV…LSVL. The Extracellular segment spans residues 65–97; it reads SSVDACYSTDITPNMLVGFMSKSKIISFYGCAT. A disulfide bridge connects residues cysteine 95 and cysteine 187. A helical membrane pass occupies residues 98 to 118; it reads QMFLAVTFGTTECFLLAAMAY. The Cytoplasmic segment spans residues 119–139; that stretch reads DRYVAIHDPLLYAVSMSPRVY. The helical transmembrane segment at 140–160 threads the bilayer; that stretch reads IPLIIASYAGGIVHAIIHTVA. Residues 161 to 194 are Extracellular-facing; the sequence is TFSLSFCRSNEVKHIFCDIPPLLAISCSETYVNE. A helical transmembrane segment spans residues 195–215; the sequence is LLLFFFVSFIELVTILIVLVS. Residues 216–234 lie on the Cytoplasmic side of the membrane; that stretch reads YAFILLSILKMNSSEGRRK. A helical membrane pass occupies residues 235–255; it reads VFSTCGAHLTAVSIYYGTILF. At 256–269 the chain is on the extracellular side; it reads MYVRPSSNYSLEHD. A helical membrane pass occupies residues 270–290; that stretch reads MIVSTFYTIGIPMLNPIIYSL. The Cytoplasmic segment spans residues 291–325; it reads RNKDVKEAMKRVLRKKINIKHRIKKLNDFSVFLMP.

This sequence belongs to the G-protein coupled receptor 1 family.

It localises to the cell membrane. Functionally, potential odorant receptor. The chain is Olfactory receptor 5T18 from Mus musculus (Mouse).